A 353-amino-acid chain; its full sequence is Protein-arginine kinase (353 aa).

The Phosphagen kinase C-terminal domain maps to 24–256 (IVLSSRIRLA…RTVIDTEEQA (233 aa)). ATP-binding positions include 27–31 (SSRIR), His93, Arg127, 178–182 (RASVM), and 209–214 (RGLYGE). An RDXXRA motif of the pArg binding pocket involved in allosteric regulation motif is present at residues 339–344 (RDVRRA).

This sequence belongs to the ATP:guanido phosphotransferase family.

The catalysed reaction is L-arginyl-[protein] + ATP = N(omega)-phospho-L-arginyl-[protein] + ADP + H(+). Its activity is regulated as follows. Appears to be allosterically activated by the binding of pArg-containing polypeptides to the pArg-binding pocket localized in the C-terminal domain of McsB. Functionally, catalyzes the specific phosphorylation of arginine residues in proteins. In Symbiobacterium thermophilum (strain DSM 24528 / JCM 14929 / IAM 14863 / T), this protein is Protein-arginine kinase.